We begin with the raw amino-acid sequence, 980 residues long: Ankycorbin (980 aa).

N-acetylmethionine is present on Met1. Position 11 is a phosphoserine (Ser11). 7 ANK repeats span residues 18-51, 52-81, 85-114, 118-147, 151-180, 184-213, and 217-247; these read KNDD…KHDS, EGKT…DVTA, TGHS…PAES, SGKT…PINL, DGNI…DVNS, SGRT…DLNL, and LGYN…DADL. Positions 247–259 are enriched in basic and acidic residues; it reads LKTPTKPKQHDQV. Residues 247-301 form a disordered region; it reads LKTPTKPKQHDQVSKISSERSGTPKKRKAPPPPISPTQLSDVSSPRSITSTPLSG. Thr249 carries the phosphothreonine modification. Positions 270 to 276 match the Nuclear localization signal motif; sequence PKKRKAP. Residues Ser281, Ser286, and Ser293 each carry the phosphoserine modification. Polar residues predominate over residues 282 to 299; the sequence is PTQLSDVSSPRSITSTPL. A phosphothreonine mark is found at Thr295 and Thr297. Phosphoserine occurs at positions 300, 304, 318, 327, 329, 340, 341, 350, 358, 419, 512, 515, 667, and 915. Positions 349–374 form a coiled coil; it reads LSLLQAKVASLTLHNKELQDKLQAKS. Residues 387–423 are disordered; the sequence is YHSTQTDLGPSLGKPGETSPPDSKSSPSVLIHSLGKS. Residues 425–947 are a coiled coil; the sequence is TDNDVRIQQL…QHQEVISVYR (523 aa).

Interacts with PALLD. Associates with actin. However, does not bind F-actin directly. Highly expressed in placenta, muscle, kidney and testis. Moderately expressed in heart, brain, lung, liver and intestine. Isoform 2 is widely expressed and expressed in fetal and adult testes, and spermatozoa.

The protein localises to the cytoplasm. It localises to the cytoskeleton. The protein resides in the stress fiber. Its subcellular location is the cell cortex. It is found in the cell junction. The protein localises to the nucleus. Its function is as follows. Plays a role in actin regulation at the ectoplasmic specialization, a type of cell junction specific to testis. Important for establishment of sperm polarity and normal spermatid adhesion. May also promote integrity of Sertoli cell tight junctions at the blood-testis barrier. This chain is Ankycorbin (RAI14), found in Homo sapiens (Human).